We begin with the raw amino-acid sequence, 392 residues long: tRNA (guanine-N(7)-)-methyltransferase (392 aa).

Positions 123, 148, and 175 each coordinate S-adenosyl-L-methionine. Substrate contacts are provided by Lys-201 and Asp-231.

This sequence belongs to the class I-like SAM-binding methyltransferase superfamily. TrmB family.

The catalysed reaction is guanosine(46) in tRNA + S-adenosyl-L-methionine = N(7)-methylguanosine(46) in tRNA + S-adenosyl-L-homocysteine. It participates in tRNA modification; N(7)-methylguanine-tRNA biosynthesis. In terms of biological role, catalyzes the formation of N(7)-methylguanine at position 46 (m7G46) in tRNA. The sequence is that of tRNA (guanine-N(7)-)-methyltransferase from Campylobacter jejuni subsp. jejuni serotype O:2 (strain ATCC 700819 / NCTC 11168).